A 178-amino-acid chain; its full sequence is Mediator of RNA polymerase II transcription subunit 30 (178 aa).

The segment at 1-22 (MSTPPLAPTGMASGPFGGPQAQ) is disordered. An N-acetylserine modification is found at S2. A coiled-coil region spans residues 134-173 (FASEERREIVEVNKKLKQKNQQLKQIMDQLRNLIWDINAM).

This sequence belongs to the Mediator complex subunit 30 family. As to quaternary structure, component of the Mediator complex, which is composed of MED1, MED4, MED6, MED7, MED8, MED9, MED10, MED11, MED12, MED13, MED13L, MED14, MED15, MED16, MED17, MED18, MED19, MED20, MED21, MED22, MED23, MED24, MED25, MED26, MED27, MED29, MED30, MED31, CCNC, CDK8 and CDC2L6/CDK11. The MED12, MED13, CCNC and CDK8 subunits form a distinct module termed the CDK8 module. Mediator containing the CDK8 module is less active than Mediator lacking this module in supporting transcriptional activation. Individual preparations of the Mediator complex lacking one or more distinct subunits have been variously termed ARC, CRSP, DRIP, PC2, SMCC and TRAP.

The protein resides in the nucleus. Its function is as follows. Component of the Mediator complex, a coactivator involved in the regulated transcription of nearly all RNA polymerase II-dependent genes. Mediator functions as a bridge to convey information from gene-specific regulatory proteins to the basal RNA polymerase II transcription machinery. Mediator is recruited to promoters by direct interactions with regulatory proteins and serves as a scaffold for the assembly of a functional preinitiation complex with RNA polymerase II and the general transcription factors. This is Mediator of RNA polymerase II transcription subunit 30 (Med30) from Mus musculus (Mouse).